The primary structure comprises 450 residues: Hydrolase ffsE (450 aa).

The active-site Nucleophile is Ser-266.

This sequence belongs to the AB hydrolase superfamily. FUS2 hydrolase family. In terms of assembly, homodimer.

Its pathway is mycotoxin biosynthesis. Its function is as follows. Hydrolase; part of the gene cluster that mediates the biosynthesis of the cytotoxic leucine-containing cytochalasans, including aspochalasin C, aspochalasin E, TMC-169, flavichalasine F, aspergillin PZ, aspochalasin M and flavichalasine G. The first step in the pathway is catalyzed by the hybrid PKS-NRPS ffsA that utilizes 8 units of malonyl-CoA to iteratively assemble the octaketide chain before addition of L-leucine by the C-terminal NRPS modules. Because ffsA lacks a designated enoylreductase (ER) domain, the required activity is provided the enoyl reductase fssC. The methyltransferase (MT) domain of ffsA catalyzes the alpha-methylation at C10 and C14 using S-adenosyl-L-methionine as the methyl-donating cosubstrate. Reduction by the hydrolyase ffsE, followed by dehydration and intra-molecular Diels-Alder cyclization by the Diels-Alderase ffsF then yield the required isoindolone-fused macrocycle. A number of oxidative steps catalyzed by the tailoring cytochrome P450 monooxygenase ffsD, the FAD-linked oxidoreductase ffsJ and the short-chain dehydrogenase/reductase ffsI, are further required to afford the final products. This Aspergillus flavipes protein is Hydrolase ffsE.